A 456-amino-acid polypeptide reads, in one-letter code: Cytochrome P450 monooxygenase avaH (456 aa).

The chain crosses the membrane as a helical span at residues 243–263 (LMSYFVSVFLVNVALFNAVSI). Cys-403 contacts heme.

It belongs to the cytochrome P450 family. Requires heme as cofactor.

It is found in the membrane. The protein operates within secondary metabolite biosynthesis. In terms of biological role, cytochrome P450 monooxygenase; part of the cluster that mediates the biosynthesis of a highly modified cyclo-arginine-tryptophan dipeptide (cRW). The first step of the pathway is perfornmed by the arginine-containing cyclodipeptide synthase (RCPDS) avaA that acts as the scaffold-generating enzyme and is responsible for formation of the cyclo-Arg-Trp (cRW) diketopiperazine. AvaB then acts as a multifunctional flavoenzyme that is responsible for generating the cyclo-Arg-formylkynurenine DKP, which can be deformylated by avaC. AvaB then further catalyzes an additional N-oxidation followed by cyclization and dehydration. The next step is an N-acetylation of the guanidine group catalyzed by the arginine N-acetyltransferase avaD. The roles of the additional enzymes identified within the ava cluster still have to be determined. This Aspergillus versicolor protein is Cytochrome P450 monooxygenase avaH.